Reading from the N-terminus, the 226-residue chain is Putative 5'-nucleotidase alr3139 (226 aa).

A divalent metal cation is bound by residues Asp8, Asp9, Ser38, and Asn89.

This sequence belongs to the SurE nucleotidase family. Requires a divalent metal cation as cofactor.

Its subcellular location is the cytoplasm. The enzyme catalyses a ribonucleoside 5'-phosphate + H2O = a ribonucleoside + phosphate. Its function is as follows. Nucleotidase that shows phosphatase activity on nucleoside 5'-monophosphates. In Nostoc sp. (strain PCC 7120 / SAG 25.82 / UTEX 2576), this protein is Putative 5'-nucleotidase alr3139.